The chain runs to 250 residues: Imidazole glycerol phosphate synthase subunit HisF (250 aa).

Residues aspartate 11 and aspartate 130 contribute to the active site.

Belongs to the HisA/HisF family. Heterodimer of HisH and HisF.

The protein resides in the cytoplasm. The enzyme catalyses 5-[(5-phospho-1-deoxy-D-ribulos-1-ylimino)methylamino]-1-(5-phospho-beta-D-ribosyl)imidazole-4-carboxamide + L-glutamine = D-erythro-1-(imidazol-4-yl)glycerol 3-phosphate + 5-amino-1-(5-phospho-beta-D-ribosyl)imidazole-4-carboxamide + L-glutamate + H(+). It functions in the pathway amino-acid biosynthesis; L-histidine biosynthesis; L-histidine from 5-phospho-alpha-D-ribose 1-diphosphate: step 5/9. IGPS catalyzes the conversion of PRFAR and glutamine to IGP, AICAR and glutamate. The HisF subunit catalyzes the cyclization activity that produces IGP and AICAR from PRFAR using the ammonia provided by the HisH subunit. This Elusimicrobium minutum (strain Pei191) protein is Imidazole glycerol phosphate synthase subunit HisF.